A 490-amino-acid chain; its full sequence is Cyclin-T1-3 (490 aa).

2 disordered regions span residues 275-391 (RVAP…GDVA) and 414-490 (AAED…RLRS). 2 stretches are compositionally biased toward polar residues: residues 282–298 (QGNDTEGSSASVVNQRA) and 352–365 (TANSNEGPNMSSTM). 2 stretches are compositionally biased toward basic and acidic residues: residues 367-391 (AMKKIDKDKVKAALEKRRKSKGDVA) and 457-490 (QEYRSPELDNRKRKDMHEHRNYDRGERDLKRLRS).

This sequence belongs to the cyclin family. Cyclin T subfamily.

This chain is Cyclin-T1-3 (CYCT1-3), found in Oryza sativa subsp. japonica (Rice).